A 574-amino-acid chain; its full sequence is Proline--tRNA ligase (574 aa).

The protein belongs to the class-II aminoacyl-tRNA synthetase family. ProS type 1 subfamily. In terms of assembly, homodimer.

It localises to the cytoplasm. It carries out the reaction tRNA(Pro) + L-proline + ATP = L-prolyl-tRNA(Pro) + AMP + diphosphate. Catalyzes the attachment of proline to tRNA(Pro) in a two-step reaction: proline is first activated by ATP to form Pro-AMP and then transferred to the acceptor end of tRNA(Pro). As ProRS can inadvertently accommodate and process non-cognate amino acids such as alanine and cysteine, to avoid such errors it has two additional distinct editing activities against alanine. One activity is designated as 'pretransfer' editing and involves the tRNA(Pro)-independent hydrolysis of activated Ala-AMP. The other activity is designated 'posttransfer' editing and involves deacylation of mischarged Ala-tRNA(Pro). The misacylated Cys-tRNA(Pro) is not edited by ProRS. The protein is Proline--tRNA ligase of Hahella chejuensis (strain KCTC 2396).